The following is a 437-amino-acid chain: Phosphoribosylamine--glycine ligase (437 aa).

The ATP-grasp domain maps to 110–322; it reads KNLLRSADIP…LVEVMQAVVD (213 aa). 142 to 203 is an ATP binding site; it reads EPTDPVNVVV…EERLTGPEVS (62 aa). Residues Glu-292 and Asn-294 each contribute to the Mg(2+) site.

Belongs to the GARS family. The cofactor is Mg(2+). Requires Mn(2+) as cofactor.

The enzyme catalyses 5-phospho-beta-D-ribosylamine + glycine + ATP = N(1)-(5-phospho-beta-D-ribosyl)glycinamide + ADP + phosphate + H(+). It participates in purine metabolism; IMP biosynthesis via de novo pathway; N(1)-(5-phospho-D-ribosyl)glycinamide from 5-phospho-alpha-D-ribose 1-diphosphate: step 2/2. This is Phosphoribosylamine--glycine ligase from Rhodopirellula baltica (strain DSM 10527 / NCIMB 13988 / SH1).